Here is a 369-residue protein sequence, read N- to C-terminus: NADH-quinone oxidoreductase subunit H (369 aa).

A run of 8 helical transmembrane segments spans residues 20-40 (VLLIKIMAVIISVMVSVAYLV), 88-108 (ICFLIAPIITFTLALLGWAVI), 133-153 (IGVLYILAISSLGVYGIIIAG), 179-199 (IGLTIVTVLLATGSLKLGEIV), 205-225 (MPYWIDLLLLPMACVFFISSL), 267-287 (ILINAMAVIFFFGGWYPPLNI), 293-313 (IPGIIWFVLKIIVLLFCFIWI), and 328-348 (LGWKVFLPISLLWVVLVSGVL).

It belongs to the complex I subunit 1 family. As to quaternary structure, NDH-1 is composed of 14 different subunits. Subunits NuoA, H, J, K, L, M, N constitute the membrane sector of the complex.

It is found in the cell inner membrane. The catalysed reaction is a quinone + NADH + 5 H(+)(in) = a quinol + NAD(+) + 4 H(+)(out). Functionally, NDH-1 shuttles electrons from NADH, via FMN and iron-sulfur (Fe-S) centers, to quinones in the respiratory chain. The immediate electron acceptor for the enzyme in this species is believed to be ubiquinone. Couples the redox reaction to proton translocation (for every two electrons transferred, four hydrogen ions are translocated across the cytoplasmic membrane), and thus conserves the redox energy in a proton gradient. This subunit may bind ubiquinone. This is NADH-quinone oxidoreductase subunit H from Ehrlichia canis (strain Jake).